The primary structure comprises 938 residues: Glutamate receptor 3.1 (938 aa).

An N-terminal signal peptide occupies residues 1–20; it reads MKFIFYLFSIFCCLCSCAQS. Residues 21 to 588 are Extracellular-facing; it reads QNISGRPDAV…GGWAFLQPFT (568 aa). Residues Asn22, Asn39, Asn59, Asn340, Asn418, Asn436, and Asn551 are each glycosylated (N-linked (GlcNAc...) asparagine). Residues 589 to 609 traverse the membrane as a helical segment; that stretch reads IKMWTVTGLFFLIIGTVVWML. The Cytoplasmic segment spans residues 610–618; it reads EHRINDEFR. The chain crosses the membrane as a helical span at residues 619 to 639; it reads GPPAKQLITVFWFSFSTLFFA. The Cytoplasmic segment spans residues 640 to 650; it reads HREDTRSTLGR. The chain crosses the membrane as a helical span at residues 651–671; the sequence is FVIIIWLFVVLIIQSSYTASL. The Extracellular portion of the chain corresponds to 672 to 830; the sequence is TSILTVQQLT…ELDQDPDRLD (159 aa). A helical membrane pass occupies residues 831–851; sequence VYSFSALFLICGLACIFALAI. Topologically, residues 852–938 are cytoplasmic; the sequence is HACNLFYQYS…SGSGSTTASC (87 aa). Positions 906-938 are disordered; that stretch reads AAKEKASGLGGSGGSMSGVSFTSSGSGSTTASC. A compositionally biased stretch (low complexity) spans 922-938; that stretch reads SGVSFTSSGSGSTTASC.

It belongs to the glutamate-gated ion channel (TC 1.A.10.1) family. As to quaternary structure, may form homomultimers. As to expression, expressed at low levels in roots and leaves.

The protein resides in the membrane. Glutamate-gated receptor that probably acts as a non-selective cation channel. Involved in root development. May regulate cell proliferation and cell death in the root apex. This Oryza sativa subsp. japonica (Rice) protein is Glutamate receptor 3.1 (GLR3.1).